The following is an 84-amino-acid chain: Exodeoxyribonuclease 7 small subunit (84 aa).

This sequence belongs to the XseB family. Heterooligomer composed of large and small subunits.

It is found in the cytoplasm. The catalysed reaction is Exonucleolytic cleavage in either 5'- to 3'- or 3'- to 5'-direction to yield nucleoside 5'-phosphates.. Bidirectionally degrades single-stranded DNA into large acid-insoluble oligonucleotides, which are then degraded further into small acid-soluble oligonucleotides. In Azoarcus sp. (strain BH72), this protein is Exodeoxyribonuclease 7 small subunit.